The following is a 261-amino-acid chain: Carnitinyl-CoA dehydratase (261 aa).

Catalysis depends on E111, which acts as the Nucleophile. The active-site Proton acceptor is the E131.

It belongs to the enoyl-CoA hydratase/isomerase family.

The catalysed reaction is (R)-carnitinyl-CoA = crotonobetainyl-CoA + H2O. It functions in the pathway amine and polyamine metabolism; carnitine metabolism. Functionally, catalyzes the reversible dehydration of L-carnitinyl-CoA to crotonobetainyl-CoA. In Salmonella paratyphi C (strain RKS4594), this protein is Carnitinyl-CoA dehydratase.